The chain runs to 320 residues: Ferrochelatase (320 aa).

Fe cation-binding residues include histidine 194 and glutamate 275.

Belongs to the ferrochelatase family. In terms of assembly, monomer.

Its subcellular location is the cytoplasm. The catalysed reaction is heme b + 2 H(+) = protoporphyrin IX + Fe(2+). Its pathway is porphyrin-containing compound metabolism; protoheme biosynthesis; protoheme from protoporphyrin-IX: step 1/1. Catalyzes the ferrous insertion into protoporphyrin IX. This is Ferrochelatase from Salmonella dublin (strain CT_02021853).